A 945-amino-acid polypeptide reads, in one-letter code: Isoleucine--tRNA ligase (945 aa).

Residues 66–76 carry the 'HIGH' region motif; sequence PYANGDIHLGH. An L-isoleucyl-5'-AMP-binding site is contributed by Glu581. The 'KMSKS' region motif lies at 622–626; it reads KMSKS. An ATP-binding site is contributed by Lys625. Zn(2+) contacts are provided by Cys908, Cys911, Cys928, and Cys931.

It belongs to the class-I aminoacyl-tRNA synthetase family. IleS type 1 subfamily. Monomer. Requires Zn(2+) as cofactor.

It is found in the cytoplasm. It carries out the reaction tRNA(Ile) + L-isoleucine + ATP = L-isoleucyl-tRNA(Ile) + AMP + diphosphate. Its function is as follows. Catalyzes the attachment of isoleucine to tRNA(Ile). As IleRS can inadvertently accommodate and process structurally similar amino acids such as valine, to avoid such errors it has two additional distinct tRNA(Ile)-dependent editing activities. One activity is designated as 'pretransfer' editing and involves the hydrolysis of activated Val-AMP. The other activity is designated 'posttransfer' editing and involves deacylation of mischarged Val-tRNA(Ile). In Burkholderia lata (strain ATCC 17760 / DSM 23089 / LMG 22485 / NCIMB 9086 / R18194 / 383), this protein is Isoleucine--tRNA ligase.